A 240-amino-acid chain; its full sequence is MSQKGLIYSFVAKGTVVLAEHTPYSGNFSTIAVQCLQKLPTNSSKYTYSCDGHTFNFLVDNGFVFLVVADESTGRSVPFVFLERVKEDFKKRYEASIKNDERHPLADEDEDDDLFGDRFSVAYNLDREFGPILKEHMQYCMSHPEEMSKLSKLKAQITEVKGIMMDNIEKVLDRGEKIELLVDKTENLQFQADSFQRQGRQLRRKMWLQSLQMKLMVAGAVFSFILIVWVVACGGFKCSS.

The Cytoplasmic portion of the chain corresponds to 1 to 215; it reads MSQKGLIYSF…MWLQSLQMKL (215 aa). Positions 6–133 constitute a Longin domain; the sequence is LIYSFVAKGT…NLDREFGPIL (128 aa). The 61-residue stretch at 149–209 folds into the v-SNARE coiled-coil homology domain; it reads KLSKLKAQIT…RQLRRKMWLQ (61 aa). A helical; Anchor for type IV membrane protein membrane pass occupies residues 216 to 236; it reads MVAGAVFSFILIVWVVACGGF. Topologically, residues 237 to 240 are vesicular; sequence KCSS.

Belongs to the synaptobrevin family. Interacts with subunits of the class C core vacuole/endosome tethering (CORVET) complex including VPS11, VCL1, VPS18, VPS33, VPS3 and VPS8. In terms of tissue distribution, highly expressed in flowers. Detected in leaves, stems and roots.

The protein localises to the early endosome membrane. It localises to the endosome membrane. Involved in the targeting and/or fusion of transport vesicles to their target membrane. In Arabidopsis thaliana (Mouse-ear cress), this protein is Vesicle-associated membrane protein 727 (VAMP727).